The sequence spans 220 residues: Small ribosomal subunit protein uS3 (220 aa).

One can recognise a KH type-2 domain in the interval 24–93 (IKEFLEYRLS…NPQIDVIDVS (70 aa)).

The protein belongs to the universal ribosomal protein uS3 family. As to quaternary structure, part of the 30S ribosomal subunit.

Binds the lower part of the 30S subunit head. The chain is Small ribosomal subunit protein uS3 from Pyrobaculum arsenaticum (strain DSM 13514 / JCM 11321 / PZ6).